The following is a 401-amino-acid chain: Tyrosine--tRNA ligase (401 aa).

The 'HIGH' region signature appears at 42–51 (PTAPDLHLGH). The short motif at 226–230 (KMSKS) is the 'KMSKS' region element. K229 is a binding site for ATP. The S4 RNA-binding domain occupies 336-397 (IALAQLLKQI…GKRRIAKLSI (62 aa)).

This sequence belongs to the class-I aminoacyl-tRNA synthetase family. TyrS type 2 subfamily. Homodimer.

The protein localises to the cytoplasm. The catalysed reaction is tRNA(Tyr) + L-tyrosine + ATP = L-tyrosyl-tRNA(Tyr) + AMP + diphosphate + H(+). Functionally, catalyzes the attachment of tyrosine to tRNA(Tyr) in a two-step reaction: tyrosine is first activated by ATP to form Tyr-AMP and then transferred to the acceptor end of tRNA(Tyr). This chain is Tyrosine--tRNA ligase, found in Legionella pneumophila subsp. pneumophila (strain Philadelphia 1 / ATCC 33152 / DSM 7513).